The following is a 156-amino-acid chain: VapC ribonuclease AF_1683 (156 aa).

Positions Leu-4–Ser-125 constitute a PINc domain. Positions 6 and 103 each coordinate Mg(2+).

The protein belongs to the PINc/VapC protein family. Requires Mg(2+) as cofactor.

Functionally, toxic component of a type II toxin-antitoxin (TA) system. An RNase. The polypeptide is VapC ribonuclease AF_1683 (Archaeoglobus fulgidus (strain ATCC 49558 / DSM 4304 / JCM 9628 / NBRC 100126 / VC-16)).